The following is an 83-amino-acid chain: QTSEKEGRSESRQERQELEETEIVTKSHQKNDWMEAEEKKKEEKEKEEEEEEKPKPGSIEENQLKDEKTKKDKESKNILSLCL.

2 stretches are compositionally biased toward basic and acidic residues: residues 1–44 and 62–76; these read QTSE…KEEK and NQLKDEKTKKDKESK. A myosin and calmodulin-binding region spans residues 1–63; it reads QTSEKEGRSE…PKPGSIEENQ (63 aa). Positions 1–83 are disordered; that stretch reads QTSEKEGRSE…ESKNILSLCL (83 aa).

In terms of processing, in non-muscle cells, phosphorylation by CDC2 during mitosis causes caldesmon to dissociate from microfilaments. Phosphorylation reduces caldesmon binding to actin, myosin, and calmodulin as well as its inhibition of actomyosin ATPase activity. Phosphorylation also occurs in both quiescent and dividing smooth muscle cells with similar effects on the interaction with actin and calmodulin and on microfilaments reorganization.

The protein localises to the cytoplasm. Its subcellular location is the cytoskeleton. It is found in the myofibril. The protein resides in the stress fiber. Actin- and myosin-binding protein implicated in the regulation of actomyosin interactions in smooth muscle and nonmuscle cells (could act as a bridge between myosin and actin filaments). Stimulates actin binding of tropomyosin which increases the stabilization of actin filament structure. In muscle tissues, inhibits the actomyosin ATPase by binding to F-actin. This inhibition is attenuated by calcium-calmodulin and is potentiated by tropomyosin. Interacts with actin, myosin, two molecules of tropomyosin and with calmodulin. Also plays an essential role during cellular mitosis and receptor capping. The chain is Non-muscle caldesmon (CALD1) from Bos taurus (Bovine).